A 7354-amino-acid polypeptide reads, in one-letter code: Microtubule-actin cross-linking factor 1, isoforms 1/2/3/4 (7354 aa).

The disordered stretch occupies residues 1 to 47 (MSSSDEETLSERSCRSERSCRSERSYRSERSGSLSPCPPGDTLPWNL). An actin-binding region spans residues 1–295 (MSSSDEETLS…VITYVSSIYD (295 aa)). Phosphoserine is present on Ser4. Residues 9–30 (LSERSCRSERSCRSERSYRSER) are compositionally biased toward basic and acidic residues. Position 35 is a phosphoserine (Ser35). Thr42 is modified (phosphothreonine). Ser57 is subject to Phosphoserine. Calponin-homology (CH) domains are found at residues 78–181 (RVQK…LHFQ) and 194–298 (MSAK…DAFP). An LRR 1 repeat occupies 148 to 171 (QRQVKLVNIRNDDITDGNPKLTLG). Position 280 is a phosphoserine (Ser280). LRR repeat units lie at residues 377-399 (LYKL…YHPN) and 441-464 (LNCE…LESG). In terms of domain architecture, SH3 spans 868–925 (KSTLSVKAICDYRQIEITICKNDECVLEDNSQRTKWKVISPTGNEAMVPSVCFLIPPP). The LRR 5 repeat unit spans residues 1050–1073 (ISELKNIRLLLEECEQRLLKQIQS). Ser1122 is modified (phosphoserine). LRR repeat units lie at residues 1128 to 1154 (ATTL…VYLN), 1187 to 1210 (PADL…VKDK), and 1257 to 1282 (HRVI…DYRA). Phosphoserine occurs at positions 1367 and 1376. Plectin repeat units lie at residues 1577–1619 (LVLL…QLLG), 1654–1696 (LKVL…ELQS), 1769–1809 (RLLE…CAIL), 1811–1848 (RQLQ…VILE), and 1855–1885 (GLLL…HKIL). Phosphoserine occurs at positions 2051, 2077, and 2081. Basic and acidic residues-rich tracts occupy residues 2120 to 2131 (KEEQAETLREEN) and 2145 to 2155 (SEGKDLSTEKS). Residues 2120-2155 (KEEQAETLREENISGDPLLVECPEESEGKDLSTEKS) are disordered. Plectin repeat units lie at residues 2276–2316 (STLS…VKLM), 2352–2393 (NVLM…RILE), 2394–2425 (GQVI…DTAD), 2487–2528 (LLTK…LRKV), and 2671–2715 (LKVL…ASHQ). Disordered stretches follow at residues 2806–2841 (AGIR…DSKV), 2951–2978 (EMGG…EVTI), and 3058–3099 (SQET…HISK). Residues 2812-2837 (NGEKAEKGRKISVEMEGQRQDEKASS) are compositionally biased toward basic and acidic residues. Acidic residues predominate over residues 2968 to 2978 (SEEESDQEVTI). Ser3082 and Ser3085 each carry phosphoserine. LRR repeat units lie at residues 3225-3244 (VGQR…LPTR), 3606-3630 (SGKS…IQSH), and 3657-3681 (LTAL…TRVA). Spectrin repeat units lie at residues 3845-3920 (ELQK…NFEE) and 3962-4070 (QYQQ…ALLQ). Ser3889 carries the post-translational modification Phosphoserine. The stretch at 3898–3920 (KGDLRFVTISGQKVLETENNFEE) is one LRR 12 repeat. LRR repeat units lie at residues 4087 to 4112 (LQSI…VIQE) and 4223 to 4249 (IQEL…TLGS). The stretch at 4428 to 4536 (RMEEVQKEAS…TVARQKQLEE (109 aa)) is one Spectrin 3 repeat. Residues Ser4458 and Ser4483 each carry the phosphoserine modification. LRR repeat units follow at residues 4473–4496 (KAFL…LAGL), 4563–4583 (GVLG…QFML), and 4728–4751 (KKRL…RMNR). A Spectrin 4 repeat occupies 4759–4863 (TQQFQQMFDE…KTANRQSRLK (105 aa)). The residue at position 4921 (Ser4921) is a Phosphoserine. LRR repeat units follow at residues 5010 to 5035 (NKNL…YLRN), 5131 to 5153 (NKIQ…MLEE), and 5240 to 5263 (KDQV…LIQS). Spectrin repeat units lie at residues 5195 to 5300 (EDFY…QLQE), 5307 to 5409 (KFQD…QLED), 5414 to 5506 (AKQF…ADIT), 5631 to 5735 (RSQQ…ARLE), 5742 to 5844 (NQFW…ALDE), 5961 to 6066 (LAEK…KLED), 6071 to 6175 (AVQY…HKLE), 6181 to 6284 (LGQF…QQLQ), 6289 to 6395 (QAQG…KLEE), 6400 to 6503 (ATEF…RSLD), 6508 to 6614 (RAKQ…KLEE), 6621 to 6722 (QFMD…RLEQ), and 6726 to 6830 (QAEE…QRLE). Thr5394 carries the phosphothreonine modification. LRR repeat units lie at residues 5654–5678 (MALG…AFSI) and 5763–5787 (AQLP…QLRE). Phosphoserine is present on Ser5988. Lys6166 carries the N6-acetyllysine modification. An LRR 23 repeat occupies 6452–6475 (RDQIIELDQTGNQLKFLSQKQDVV). Residues 6904–6937 (SVEPTHAPFMEKSRSGSRKSLNQPTPPPMPILSQ) are disordered. Ser6923 is modified (phosphoserine). 2 consecutive EF-hand domains span residues 7001–7036 (HKKS…SKFP) and 7037–7072 (TTKL…NKDA). Ca(2+)-binding residues include Asp7014, Asp7016, Asp7018, Lys7020, Glu7025, Asp7050, Asp7052, Asp7054, Tyr7056, and Glu7061. The GAR domain occupies 7077–7155 (TDADKIEDEV…EFLVKNDPCR (79 aa)). The C-terminal tail stretch occupies residues 7077–7354 (TDADKIEDEV…ASPRTPGPKR (278 aa)). Positions 7171 to 7354 (PEGASQGMTP…ASPRTPGPKR (184 aa)) are disordered. Residues 7191–7225 (SSRAASPTRSSSSASQSNHSCTSMPSSPATPASGT) show a composition bias toward low complexity. A Phosphothreonine modification is found at Thr7220. A compositionally biased stretch (polar residues) spans 7242–7261 (FHSSRTSLAGDTSNSSSPAS). Ser7245 and Ser7258 each carry phosphoserine. A compositionally biased stretch (low complexity) spans 7276-7290 (SRPGSRAGSRAGSRA). A 4 X 4 AA tandem repeats of [GS]-S-R-[AR] region spans residues 7279–7294 (GSRAGSRAGSRASSRR). Residues Ser7296 and Ser7299 each carry the phosphoserine modification. Residues 7305–7315 (ETQSACSDTSE) are compositionally biased toward polar residues. Over residues 7316–7327 (SSAAGGQGSSRR) the composition is skewed to low complexity.

This sequence belongs to the plakin or cytolinker family. In terms of assembly, interacts with AXIN1, LRP6 and GOLGA4. Found in a complex composed of MACF1, APC, AXIN1, CTNNB1 and GSK3B. Interacts with MAPRE1, CLASP1 and CLASP2. Interacts with CAMSAP3. In terms of processing, phosphorylated on serine residues in the C-terminal tail by GSK3B. Phosphorylation inhibits microtubule-binding and this plays a critical role in bulge stem cell migration and skin wound repair. Wnt-signaling can repress phosphorylation. In terms of tissue distribution, enriched in the hair follicle stem cells (at protein level). Isoform 1 and isoform 2 are ubiquitous expressed, with higher levels seen in lung, heart, thymus, spleen and brain.

The protein resides in the cytoplasm. The protein localises to the cytoskeleton. It is found in the golgi apparatus. Its subcellular location is the cell membrane. It localises to the cell projection. The protein resides in the ruffle membrane. In terms of biological role, F-actin-binding protein which plays a role in cross-linking actin to other cytoskeletal proteins and also binds to microtubules. Plays an important role in ERBB2-dependent stabilization of microtubules at the cell cortex. Acts as a positive regulator of Wnt receptor signaling pathway and is involved in the translocation of AXIN1 and its associated complex (composed of APC, CTNNB1 and GSK3B) from the cytoplasm to the cell membrane. Has actin-regulated ATPase activity and is essential for controlling focal adhesions (FAs) assembly and dynamics. Interaction with CAMSAP3 at the minus ends of non-centrosomal microtubules tethers microtubules minus-ends to actin filaments, regulating focal adhesion size and cell migration. May play role in delivery of transport vesicles containing GPI-linked proteins from the trans-Golgi network through its interaction with GOLGA4. Plays a key role in wound healing and epidermal cell migration. Required for efficient upward migration of bulge cells in response to wounding and this function is primarily rooted in its ability to coordinate microtubule dynamics and polarize hair follicle stem cells. As a regulator of actin and microtubule arrangement and stabilization, it plays an essential role in neurite outgrowth, branching and spine formation during brain development. In Mus musculus (Mouse), this protein is Microtubule-actin cross-linking factor 1, isoforms 1/2/3/4.